An 831-amino-acid chain; its full sequence is Translation initiation factor IF-2 (831 aa).

Residues 329–499 (TRAPVVTVMG…LLISEMQDLK (171 aa)) enclose the tr-type G domain. Positions 338 to 345 (GHVDHGKT) are G1. 338-345 (GHVDHGKT) contacts GTP. Residues 363-367 (GITQH) form a G2 region. The interval 385–388 (DTPG) is G3. GTP is bound by residues 385-389 (DTPGH) and 439-442 (NKID). Residues 439 to 442 (NKID) form a G4 region. Residues 475–477 (SAL) are G5.

It belongs to the TRAFAC class translation factor GTPase superfamily. Classic translation factor GTPase family. IF-2 subfamily.

The protein localises to the cytoplasm. In terms of biological role, one of the essential components for the initiation of protein synthesis. Protects formylmethionyl-tRNA from spontaneous hydrolysis and promotes its binding to the 30S ribosomal subunits. Also involved in the hydrolysis of GTP during the formation of the 70S ribosomal complex. The chain is Translation initiation factor IF-2 from Rickettsia typhi (strain ATCC VR-144 / Wilmington).